Reading from the N-terminus, the 142-residue chain is Large ribosomal subunit protein uL11 (142 aa).

This sequence belongs to the universal ribosomal protein uL11 family. In terms of assembly, part of the ribosomal stalk of the 50S ribosomal subunit. Interacts with L10 and the large rRNA to form the base of the stalk. L10 forms an elongated spine to which L12 dimers bind in a sequential fashion forming a multimeric L10(L12)X complex. Post-translationally, one or more lysine residues are methylated.

In terms of biological role, forms part of the ribosomal stalk which helps the ribosome interact with GTP-bound translation factors. In Shewanella amazonensis (strain ATCC BAA-1098 / SB2B), this protein is Large ribosomal subunit protein uL11.